Reading from the N-terminus, the 463-residue chain is MSNLGKVIQIIGPIIDIKFDSENLPDLFNALEINAGDRKVIAEVEQHIGDDTIRAIAMEDTEGLKRGMEALDTGKSVSVPVGKEVLGRLFNVLGKPIDGAGEFTSEESYPIHRPAPSFEEQSVEPEIFETGIKVIDLLAPYQKGGKIGLFGGAGVGKTVLIQELINNIAKEHGGLSVFTGVGERTREGNDLYYEMKESGVLEKTALVFGQMNEPPGARMRVALTGLTMSEYFRDQGQDVLLFIDNIFRFTQAGSEVSALLGRIPSAVGYQPTLATEMGALQERITSTKNGSITSVQAVYVPADDLTDPAPATTFAHLDATTVLSRAITELGIYPAVDPLESSSRMLDPRIIGEEHYEVAIKVKNILERYRELQDIIAILGIDELSEEDKLVVGRARKIQRFLSQPFTVAEQFTGMQGKYVPIKETVRGFKEILEGKHDNIPESAFLFQGTIEDVLKKAQQMEI.

Position 151–158 (G151–T158) interacts with ATP.

Belongs to the ATPase alpha/beta chains family. As to quaternary structure, F-type ATPases have 2 components, CF(1) - the catalytic core - and CF(0) - the membrane proton channel. CF(1) has five subunits: alpha(3), beta(3), gamma(1), delta(1), epsilon(1). CF(0) has three main subunits: a(1), b(2) and c(9-12). The alpha and beta chains form an alternating ring which encloses part of the gamma chain. CF(1) is attached to CF(0) by a central stalk formed by the gamma and epsilon chains, while a peripheral stalk is formed by the delta and b chains.

The protein resides in the cell membrane. The enzyme catalyses ATP + H2O + 4 H(+)(in) = ADP + phosphate + 5 H(+)(out). Functionally, produces ATP from ADP in the presence of a proton gradient across the membrane. The catalytic sites are hosted primarily by the beta subunits. This chain is ATP synthase subunit beta, found in Clostridium botulinum (strain Okra / Type B1).